The following is a 273-amino-acid chain: Pantothenate synthetase (273 aa).

Residue 27–34 (MGALHDGH) coordinates ATP. The active-site Proton donor is the His34. Gln58 lines the (R)-pantoate pocket. Residue Gln58 participates in beta-alanine binding. 144-147 (GKKD) is a binding site for ATP. (R)-pantoate is bound at residue Gln150. Residues Val173 and 181–184 (LSSR) contribute to the ATP site.

The protein belongs to the pantothenate synthetase family. Homodimer.

The protein localises to the cytoplasm. The catalysed reaction is (R)-pantoate + beta-alanine + ATP = (R)-pantothenate + AMP + diphosphate + H(+). The protein operates within cofactor biosynthesis; (R)-pantothenate biosynthesis; (R)-pantothenate from (R)-pantoate and beta-alanine: step 1/1. Functionally, catalyzes the condensation of pantoate with beta-alanine in an ATP-dependent reaction via a pantoyl-adenylate intermediate. The protein is Pantothenate synthetase of Campylobacter concisus (strain 13826).